We begin with the raw amino-acid sequence, 300 residues long: Ribosomal protein L11 methyltransferase (300 aa).

Residues threonine 152, glycine 173, aspartate 195, and asparagine 234 each contribute to the S-adenosyl-L-methionine site.

It belongs to the methyltransferase superfamily. PrmA family.

It is found in the cytoplasm. It catalyses the reaction L-lysyl-[protein] + 3 S-adenosyl-L-methionine = N(6),N(6),N(6)-trimethyl-L-lysyl-[protein] + 3 S-adenosyl-L-homocysteine + 3 H(+). In terms of biological role, methylates ribosomal protein L11. This chain is Ribosomal protein L11 methyltransferase, found in Paraburkholderia phytofirmans (strain DSM 17436 / LMG 22146 / PsJN) (Burkholderia phytofirmans).